The following is a 123-amino-acid chain: 13 kDa major membrane protein (123 aa).

The protein resides in the cell membrane. The sequence is that of 13 kDa major membrane protein from Francisella tularensis subsp. holarctica (strain LVS).